A 229-amino-acid polypeptide reads, in one-letter code: Protein N-lysine methyltransferase METTL21D (229 aa).

Position 2 is an N-acetylalanine (Ala-2). Ser-8 carries the post-translational modification Phosphoserine. S-adenosyl-L-methionine-binding positions include Trp-43, 75–77 (GSG), Asp-96, Trp-126, Ala-143, and Tyr-148.

It belongs to the methyltransferase superfamily. METTL21 family. In terms of assembly, interacts with ALKBH6. Interacts with ASPSCR1 and UBXN6; interaction with ASPSCR1, but not with UBXN6, enhances VCP methylation.

The protein resides in the cytoplasm. The catalysed reaction is L-lysyl-[protein] + 3 S-adenosyl-L-methionine = N(6),N(6),N(6)-trimethyl-L-lysyl-[protein] + 3 S-adenosyl-L-homocysteine + 3 H(+). Functionally, protein N-lysine methyltransferase that specifically trimethylates 'Lys-315' of VCP/p97; this modification may decrease VCP ATPase activity. The chain is Protein N-lysine methyltransferase METTL21D (VCPKMT) from Homo sapiens (Human).